The following is a 652-amino-acid chain: MPSGSSAALALALAAAPAPLPQPPPLPPPPPAGGPELEGDGLLLRERLAALGLDDPSPAEPGAPALRAAAVAAAAAAQCQARRATGLAPEEPGRLATSETAELELEVDEEEGEEAELDGELLEEEELEEAEEEDRPSLLLLSPPAATASQTQPIPGGPLGSVLLPAAGFDAREAAAAGVLYGGDDAQGMMAAMLSHAYGPGGGGAAAAALNGEQAALLRRKSVNTTECVPVPSSEHVAEIVGRQGCKIKALRAKTNTYIKTPVRGEEPIFVVTGRKEDVAMAKREILSAAEHFSMIRASRNKNGPALGGLSCSPNLPGQTTVQVRVPYRVVGLVVGPKGATIKRIQQQTHTYIVTPSRDKEPVFEVTGMPENVDRAREEIEMHIAMRTGNYIELNEENDFHYNGTDVSFEGGTLGSAWLSSNPVPPSRARMMSNYRNDSSSSLGSGSTDSYFGSNRLADFSPTSPFSTGNFWFGDTLPSVGSEDLTVDSPAFDSLPTSAQTIWTPFEPVNPLSGFGSDPSGNMKTQRRGSQPSTPRLSPTFPESIEHPLARRVRSDPPSTGNHVGLPIYIPAFSNGTNSYSSSNGGSTSSSPPESRRKHDCVICFENEVIAALVPCGHNLFCMECANKICEKRTPSCPVCQTAVTQAIQIHS.

Disordered regions lie at residues 15-39 (AAPA…ELEG) and 80-136 (QARR…EDRP). A compositionally biased stretch (pro residues) spans 18–33 (APLPQPPPLPPPPPAG). The segment covering 101–134 (AELELEVDEEEGEEAELDGELLEEEELEEAEEED) has biased composition (acidic residues). KH domains are found at residues 225-286 (TTEC…KREI) and 319-380 (QTTV…REEI). 2 disordered regions span residues 429-448 (ARMM…SGST) and 506-566 (FEPV…HVGL). Residues 430–448 (RMMSNYRNDSSSSLGSGST) are compositionally biased toward low complexity. Residues 519–537 (PSGNMKTQRRGSQPSTPRL) are compositionally biased toward polar residues. Phosphoserine occurs at positions 530 and 538. Residues 544–555 (SIEHPLARRVRS) show a composition bias toward basic and acidic residues. An RING-type zinc finger spans residues 601 to 641 (CVICFENEVIAALVPCGHNLFCMECANKICEKRTPSCPVCQ).

As to quaternary structure, interacts with USP7, which antagonizes the ability to degrade mRNA. Phosphorylated.

It localises to the nucleus. It is found in the cytoplasm. It catalyses the reaction S-ubiquitinyl-[E2 ubiquitin-conjugating enzyme]-L-cysteine + [acceptor protein]-L-lysine = [E2 ubiquitin-conjugating enzyme]-L-cysteine + N(6)-ubiquitinyl-[acceptor protein]-L-lysine.. Functionally, RNA-binding protein. May be involved in post-transcriptional regulatory mechanisms, modulating levels of some mRNAs by promoting their degradation in a way involving ubiquitin ligase activity. May act as suppressor of replication stress and chromosome missegregation. This is RNA-binding E3 ubiquitin-protein ligase MEX3C (Mex3c) from Mus musculus (Mouse).